The sequence spans 254 residues: Adenosylcobinamide-GDP ribazoletransferase (254 aa).

Helical transmembrane passes span 29–49 (LFWF…LGYF), 50–70 (TSLL…GIAL), 98–118 (IMKD…MMLL), 121–141 (IAIL…GVLL), 170–190 (AGVV…FPLL), 198–218 (LYAV…TGLL), and 230–250 (VLGA…ALSA).

The protein belongs to the CobS family. Mg(2+) is required as a cofactor.

It localises to the cell inner membrane. The catalysed reaction is alpha-ribazole + adenosylcob(III)inamide-GDP = adenosylcob(III)alamin + GMP + H(+). It catalyses the reaction alpha-ribazole 5'-phosphate + adenosylcob(III)inamide-GDP = adenosylcob(III)alamin 5'-phosphate + GMP + H(+). It participates in cofactor biosynthesis; adenosylcobalamin biosynthesis; adenosylcobalamin from cob(II)yrinate a,c-diamide: step 7/7. Its function is as follows. Joins adenosylcobinamide-GDP and alpha-ribazole to generate adenosylcobalamin (Ado-cobalamin). Also synthesizes adenosylcobalamin 5'-phosphate from adenosylcobinamide-GDP and alpha-ribazole 5'-phosphate. The protein is Adenosylcobinamide-GDP ribazoletransferase of Pelodictyon phaeoclathratiforme (strain DSM 5477 / BU-1).